The primary structure comprises 298 residues: GTPase Era (298 aa).

The 168-residue stretch at 4–171 (RAGFVALIGR…KEKIVSFLPE (168 aa)) folds into the Era-type G domain. The tract at residues 12 to 19 (GRTNVGKS) is G1. Residue 12–19 (GRTNVGKS) coordinates GTP. The interval 38 to 42 (QTTRN) is G2. Residues 59–62 (DTPG) form a G3 region. GTP contacts are provided by residues 59-63 (DTPGI) and 121-124 (NKID). The segment at 121 to 124 (NKID) is G4. The G5 stretch occupies residues 150–152 (ISA). The 79-residue stretch at 202–280 (LEEEVPHGVY…FLQLWVKVRK (79 aa)) folds into the KH type-2 domain.

The protein belongs to the TRAFAC class TrmE-Era-EngA-EngB-Septin-like GTPase superfamily. Era GTPase family. Monomer.

It is found in the cytoplasm. The protein resides in the cell membrane. In terms of biological role, an essential GTPase that binds both GDP and GTP, with rapid nucleotide exchange. Plays a role in 16S rRNA processing and 30S ribosomal subunit biogenesis and possibly also in cell cycle regulation and energy metabolism. The chain is GTPase Era from Caldanaerobacter subterraneus subsp. tengcongensis (strain DSM 15242 / JCM 11007 / NBRC 100824 / MB4) (Thermoanaerobacter tengcongensis).